Consider the following 172-residue polypeptide: Protein-export protein SecB (172 aa).

A disordered region spans residues 152-172 (AQGAEGGNSGIVMPDGSQARH).

It belongs to the SecB family. Homotetramer, a dimer of dimers. One homotetramer interacts with 1 SecA dimer.

It is found in the cytoplasm. In terms of biological role, one of the proteins required for the normal export of preproteins out of the cell cytoplasm. It is a molecular chaperone that binds to a subset of precursor proteins, maintaining them in a translocation-competent state. It also specifically binds to its receptor SecA. The protein is Protein-export protein SecB of Cupriavidus taiwanensis (strain DSM 17343 / BCRC 17206 / CCUG 44338 / CIP 107171 / LMG 19424 / R1) (Ralstonia taiwanensis (strain LMG 19424)).